Reading from the N-terminus, the 162-residue chain is Lectin BRA-3 (162 aa).

The signal sequence occupies residues 1-24; that stretch reads MQRSEIVQAVTLLVVVFAITTAEC. The region spanning 25–152 is the C-type lectin domain; the sequence is TCPGNLDWQE…NKNKNFLCKM (128 aa). Disulfide bonds link C26–C39, C56–C150, and C125–C142.

As to quaternary structure, homotetramer; disulfide-linked. As to expression, coelemic fluid.

In terms of biological role, sugar-binding protein which recognizes specific carbohydrate structures and agglutinates a variety of animal cells by binding to cell-surface glycoproteins and glycolipids. Calcium-dependent lectin. Invertebrate lectins may be involved in defense functions. The chain is Lectin BRA-3 from Megabalanus rosa (Acorn barnacle).